Consider the following 280-residue polypeptide: Hydroxyethylthiazole kinase (280 aa).

Residue Met-50 participates in substrate binding. ATP is bound by residues Lys-125 and Thr-178. Gly-205 lines the substrate pocket.

It belongs to the Thz kinase family. Mg(2+) serves as cofactor.

The enzyme catalyses 5-(2-hydroxyethyl)-4-methylthiazole + ATP = 4-methyl-5-(2-phosphooxyethyl)-thiazole + ADP + H(+). It functions in the pathway cofactor biosynthesis; thiamine diphosphate biosynthesis; 4-methyl-5-(2-phosphoethyl)-thiazole from 5-(2-hydroxyethyl)-4-methylthiazole: step 1/1. Catalyzes the phosphorylation of the hydroxyl group of 4-methyl-5-beta-hydroxyethylthiazole (THZ). The chain is Hydroxyethylthiazole kinase from Lacticaseibacillus casei (strain BL23) (Lactobacillus casei).